We begin with the raw amino-acid sequence, 179 residues long: Large ribosomal subunit protein uL5 (179 aa).

It belongs to the universal ribosomal protein uL5 family. Part of the 50S ribosomal subunit; part of the 5S rRNA/L5/L18/L25 subcomplex. Contacts the 5S rRNA and the P site tRNA. Forms a bridge to the 30S subunit in the 70S ribosome.

This is one of the proteins that bind and probably mediate the attachment of the 5S RNA into the large ribosomal subunit, where it forms part of the central protuberance. In the 70S ribosome it contacts protein S13 of the 30S subunit (bridge B1b), connecting the 2 subunits; this bridge is implicated in subunit movement. Contacts the P site tRNA; the 5S rRNA and some of its associated proteins might help stabilize positioning of ribosome-bound tRNAs. This chain is Large ribosomal subunit protein uL5, found in Halorhodospira halophila (strain DSM 244 / SL1) (Ectothiorhodospira halophila (strain DSM 244 / SL1)).